A 268-amino-acid polypeptide reads, in one-letter code: Resolvase (268 aa).

A Tyr recombinase domain is found at 47 to 250 (ELPKYLLAPE…FALDVAARHR (204 aa)). Catalysis depends on residues arginine 82, lysine 114, histidine 202, arginine 205, and histidine 228. Tyrosine 237 functions as the O-(3'-phospho-DNA)-tyrosine intermediate in the catalytic mechanism.

It belongs to the 'phage' integrase family.

Its function is as follows. Acts as a repressor of transcription and as a site-specific resolvase that cleaves at the RfsF site. The sequence is that of Resolvase (resD) from Escherichia coli (strain K12).